The primary structure comprises 249 residues: uncharacterized protein (249 aa).

An N-terminal signal peptide occupies residues 1–20 (MSNQNKVLSLGLLLLAAVAA).

Belongs to the IIV-6 117L family.

This is an uncharacterized protein from Acheta domesticus (House cricket).